Reading from the N-terminus, the 529-residue chain is Ribonuclease Y (529 aa).

Residues 4–24 traverse the membrane as a helical segment; sequence GLIYISLEVIVACLISALAMY. One can recognise a KH domain in the interval 216-297; it reads FTNRIALPCS…NRIEEVYHRV (82 aa). The region spanning 342–435 is the HD domain; that stretch reads ALQHSKEVAL…VCAADALSAG (94 aa).

It belongs to the RNase Y family.

It is found in the cell membrane. Functionally, endoribonuclease that initiates mRNA decay. In Helicobacter acinonychis (strain Sheeba), this protein is Ribonuclease Y.